A 210-amino-acid chain; its full sequence is T-cell surface glycoprotein CD8 beta chain (210 aa).

The signal sequence occupies residues 1–21 (MQPGLWLLLATQLAALRGSSV). In terms of domain architecture, Ig-like V-type spans 22–132 (LQQAPGSVMV…ELTFGKGTRL (111 aa)). Topologically, residues 22 to 170 (LQQAPGSVMV…VTQKGPSCGL (149 aa)) are extracellular. A disulfide bond links cysteine 41 and cysteine 116. Asparagine 102 is a glycosylation site (N-linked (GlcNAc...) asparagine). The disordered stretch occupies residues 139–161 (PTNSQPTKKPTPRKKMCRPPSPV). Residues 171–191 (LTLGLLVAGVLVLLVSLGVAI) form a helical membrane-spanning segment. The Cytoplasmic portion of the chain corresponds to 192 to 210 (HLYRLKRRARLRLLKQFYK).

As to quaternary structure, forms disulfide-linked heterodimers with CD8A at the cell surface. Interacts with CD3D; this interaction couples TCR-CD3 with CD8. Interacts with LCK. In terms of processing, phosphorylated as a consequence of T-cell activation. Palmitoylated at the cytoplasmic tail and thereby targets the heterodimer CD8A/CD8B to lipid rafts unlike CD8A homodimers.

It localises to the cell membrane. In terms of biological role, integral membrane glycoprotein that plays an essential role in the immune response and serves multiple functions in responses against both external and internal offenses. In T-cells, functions primarily as a coreceptor for MHC class I molecule:peptide complex. The antigens presented by class I peptides are derived from cytosolic proteins while class II derived from extracellular proteins. Interacts simultaneously with the T-cell receptor (TCR) and the MHC class I proteins presented by antigen presenting cells (APCs). In turn, recruits the Src kinase LCK to the vicinity of the TCR-CD3 complex. A palmitoylation site in the cytoplasmic tail of CD8B chain contributes to partitioning of CD8 into the plasma membrane lipid rafts where signaling proteins are enriched. Once LCK recruited, it initiates different intracellular signaling pathways by phosphorylating various substrates ultimately leading to lymphokine production, motility, adhesion and activation of cytotoxic T-lymphocytes (CTLs). Additionally, plays a critical role in thymic selection of CD8+ T-cells. The sequence is that of T-cell surface glycoprotein CD8 beta chain (CD8B) from Felis catus (Cat).